The primary structure comprises 221 residues: Pectate lyase C (221 aa).

The N-terminal stretch at 1–27 (MKKIVSILFMFGLVMGFSQFQPSTVFA) is a signal peptide.

It belongs to the polysaccharide lyase 3 family. Requires Ca(2+) as cofactor.

It localises to the secreted. It carries out the reaction Eliminative cleavage of (1-&gt;4)-alpha-D-galacturonan to give oligosaccharides with 4-deoxy-alpha-D-galact-4-enuronosyl groups at their non-reducing ends.. The catalysed reaction is Eliminative cleavage of (1-&gt;4)-alpha-D-galacturonan methyl ester to give oligosaccharides with 4-deoxy-6-O-methyl-alpha-D-galact-4-enuronosyl groups at their non-reducing ends.. Its pathway is glycan metabolism; pectin degradation; 2-dehydro-3-deoxy-D-gluconate from pectin: step 2/5. Functionally, catalyzes the depolymerization of both polygalacturonate and pectins of methyl esterification degree from 22 to 89%, with an endo mode of action. In contrast to the majority of pectate lyases, displays high activity on highly methylated pectins. Is also able to cleave trigalacturonate to galacturonic acid and unsaturated digalacturonate. This Bacillus subtilis (strain 168) protein is Pectate lyase C (pelC).